The following is a 289-amino-acid chain: Nucleotide-binding protein Francci3_1634 (289 aa).

13 to 20 (GLSGAGRS) contributes to the ATP binding site. GTP is bound at residue 64 to 67 (DVRG).

The protein belongs to the RapZ-like family.

Displays ATPase and GTPase activities. In Frankia casuarinae (strain DSM 45818 / CECT 9043 / HFP020203 / CcI3), this protein is Nucleotide-binding protein Francci3_1634.